Reading from the N-terminus, the 339-residue chain is Ketol-acid reductoisomerase (NADP(+)) (339 aa).

The region spanning 1-182 (MRVYYDSDAD…GGGRAGIIET (182 aa)) is the KARI N-terminal Rossmann domain. NADP(+)-binding positions include 24–27 (YGSQ), Arg-48, Ser-51, and 83–86 (DEGQ). The active site involves His-108. Gly-134 contributes to the NADP(+) binding site. The KARI C-terminal knotted domain occupies 183-328 (TFKEECETDL…EKLRAMMPWI (146 aa)). The Mg(2+) site is built by Asp-191, Glu-195, Glu-227, and Glu-231. Ser-252 contributes to the substrate binding site.

The protein belongs to the ketol-acid reductoisomerase family. It depends on Mg(2+) as a cofactor.

The catalysed reaction is (2R)-2,3-dihydroxy-3-methylbutanoate + NADP(+) = (2S)-2-acetolactate + NADPH + H(+). The enzyme catalyses (2R,3R)-2,3-dihydroxy-3-methylpentanoate + NADP(+) = (S)-2-ethyl-2-hydroxy-3-oxobutanoate + NADPH + H(+). The protein operates within amino-acid biosynthesis; L-isoleucine biosynthesis; L-isoleucine from 2-oxobutanoate: step 2/4. It functions in the pathway amino-acid biosynthesis; L-valine biosynthesis; L-valine from pyruvate: step 2/4. Its function is as follows. Involved in the biosynthesis of branched-chain amino acids (BCAA). Catalyzes an alkyl-migration followed by a ketol-acid reduction of (S)-2-acetolactate (S2AL) to yield (R)-2,3-dihydroxy-isovalerate. In the isomerase reaction, S2AL is rearranged via a Mg-dependent methyl migration to produce 3-hydroxy-3-methyl-2-ketobutyrate (HMKB). In the reductase reaction, this 2-ketoacid undergoes a metal-dependent reduction by NADPH to yield (R)-2,3-dihydroxy-isovalerate. The polypeptide is Ketol-acid reductoisomerase (NADP(+)) (Acidiphilium cryptum (strain JF-5)).